A 132-amino-acid chain; its full sequence is Phosphoribosyl-AMP cyclohydrolase (132 aa).

D81 provides a ligand contact to Mg(2+). Zn(2+) is bound at residue C82. 2 residues coordinate Mg(2+): D83 and D85. Zn(2+)-binding residues include C99 and C106.

It belongs to the PRA-CH family. In terms of assembly, homodimer. Mg(2+) is required as a cofactor. The cofactor is Zn(2+).

It is found in the cytoplasm. The catalysed reaction is 1-(5-phospho-beta-D-ribosyl)-5'-AMP + H2O = 1-(5-phospho-beta-D-ribosyl)-5-[(5-phospho-beta-D-ribosylamino)methylideneamino]imidazole-4-carboxamide. It participates in amino-acid biosynthesis; L-histidine biosynthesis; L-histidine from 5-phospho-alpha-D-ribose 1-diphosphate: step 3/9. Functionally, catalyzes the hydrolysis of the adenine ring of phosphoribosyl-AMP. The sequence is that of Phosphoribosyl-AMP cyclohydrolase from Chromobacterium violaceum (strain ATCC 12472 / DSM 30191 / JCM 1249 / CCUG 213 / NBRC 12614 / NCIMB 9131 / NCTC 9757 / MK).